We begin with the raw amino-acid sequence, 273 residues long: 4-hydroxy-tetrahydrodipicolinate reductase (273 aa).

NAD(+) is bound by residues 11-16 (GATGKM) and 106-108 (GTT). H162 functions as the Proton donor/acceptor in the catalytic mechanism. H163 contributes to the (S)-2,3,4,5-tetrahydrodipicolinate binding site. The active-site Proton donor is K166. Position 172 to 173 (172 to 173 (GT)) interacts with (S)-2,3,4,5-tetrahydrodipicolinate.

It belongs to the DapB family.

It is found in the cytoplasm. It carries out the reaction (S)-2,3,4,5-tetrahydrodipicolinate + NAD(+) + H2O = (2S,4S)-4-hydroxy-2,3,4,5-tetrahydrodipicolinate + NADH + H(+). The enzyme catalyses (S)-2,3,4,5-tetrahydrodipicolinate + NADP(+) + H2O = (2S,4S)-4-hydroxy-2,3,4,5-tetrahydrodipicolinate + NADPH + H(+). The protein operates within amino-acid biosynthesis; L-lysine biosynthesis via DAP pathway; (S)-tetrahydrodipicolinate from L-aspartate: step 4/4. In terms of biological role, catalyzes the conversion of 4-hydroxy-tetrahydrodipicolinate (HTPA) to tetrahydrodipicolinate. The polypeptide is 4-hydroxy-tetrahydrodipicolinate reductase (Synechococcus sp. (strain ATCC 27144 / PCC 6301 / SAUG 1402/1) (Anacystis nidulans)).